Consider the following 606-residue polypeptide: MTNEASLTPIPLPAEKLAQLQTVTNGLSTAQIAWISGYLWGRSSGADTTNQSLPTSPATEQPVEPTVITILSASQTGNARRIAEELRDDLLAAHLKVNLINTGDYKFKQIDREKIILMVTSTQGEGEPPEEAVAFYKFLFSKKAPKLTHTAFAVFGLGDITYEHFAQAGNDFDRRFEELGGERLLPRVDADVDYEEAAEAWRKEVTELLEKRVPSANSAQIAATAISPVDEVSSTPYDKESPLTATLSVNQKITGRHSDKDVRHIEIDLGDSGLHYKPGDALGVWYENDPALIRECLDLLGLSGEESIKVNDKILPLAQALQQSFELTVNNTRLVESYATLTQNKALEKIISDKAALQDYAQNTPIVDMIRQAGGKLTAEQFVSLLRPLTPRLYSIASSQAEVENEVHLTVGVVRYEIDGHKRAGGASSFLADRLAENGNLRVFVEHNDNFRLPDNPDAPVIMIGPGTGVAPFRAFMQQRDNDGAKGKNWLFFGNPHFIEDFLYQVEWQAYVKQGLLTHIDLAWSRDQAKKVYVQDKLREKAAEIWKWIKEDGAYLYVCGDATHMAKDVDKALIDIIRQEGGMDEEAADEFLTELRLERRYQRDVY.

One can recognise a Flavodoxin-like domain in the interval 68–206 (ITILSASQTG…AAEAWRKEVT (139 aa)). FMN contacts are provided by residues 74 to 79 (SQTGNA), 121 to 124 (STQG), and 157 to 166 (LGDITYEHFA). Residues 240–454 (ESPLTATLSV…VEHNDNFRLP (215 aa)) form the FAD-binding FR-type domain. FAD contacts are provided by residues threonine 328, glutamine 362, 392–395 (RLYS), 410–412 (TVG), tyrosine 416, and 425–428 (GGAS). Residues 525-526 (SR), 531-535 (KVYVQ), and aspartate 568 each bind NADP(+). Residue tyrosine 606 participates in FAD binding.

This sequence belongs to the NADPH-dependent sulphite reductase flavoprotein subunit CysJ family. It in the N-terminal section; belongs to the flavodoxin family. The protein in the C-terminal section; belongs to the flavoprotein pyridine nucleotide cytochrome reductase family. Alpha(8)-beta(8). The alpha component is a flavoprotein, the beta component is a hemoprotein. FAD serves as cofactor. It depends on FMN as a cofactor.

The catalysed reaction is hydrogen sulfide + 3 NADP(+) + 3 H2O = sulfite + 3 NADPH + 4 H(+). Its pathway is sulfur metabolism; hydrogen sulfide biosynthesis; hydrogen sulfide from sulfite (NADPH route): step 1/1. Component of the sulfite reductase complex that catalyzes the 6-electron reduction of sulfite to sulfide. This is one of several activities required for the biosynthesis of L-cysteine from sulfate. The flavoprotein component catalyzes the electron flow from NADPH -&gt; FAD -&gt; FMN to the hemoprotein component. The chain is Sulfite reductase [NADPH] flavoprotein alpha-component from Zymomonas mobilis subsp. mobilis (strain ATCC 31821 / ZM4 / CP4).